The chain runs to 122 residues: Large ribosomal subunit protein uL14 (122 aa).

It belongs to the universal ribosomal protein uL14 family. In terms of assembly, part of the 50S ribosomal subunit. Forms a cluster with proteins L3 and L19. In the 70S ribosome, L14 and L19 interact and together make contacts with the 16S rRNA in bridges B5 and B8.

Binds to 23S rRNA. Forms part of two intersubunit bridges in the 70S ribosome. The chain is Large ribosomal subunit protein uL14 from Amoebophilus asiaticus (strain 5a2).